Consider the following 541-residue polypeptide: 2-hydroxyacylsphingosine 1-beta-galactosyltransferase (541 aa).

The signal sequence occupies residues 1-20; sequence MKSYTPYFMLLWSAVGIARA. N-linked (GlcNAc...) asparagine glycosylation is found at asparagine 78, asparagine 333, and asparagine 442. A helical membrane pass occupies residues 472–492; it reads YFLLDIAFVLLLGAVLLYFIL. A disordered region spans residues 518 to 541; the sequence is HYQNGIRNGKYKGNGRVKHEKKVR. Positions 526–541 are enriched in basic residues; that stretch reads GKYKGNGRVKHEKKVR.

Belongs to the UDP-glycosyltransferase family.

It localises to the membrane. It is found in the endoplasmic reticulum. It carries out the reaction an N-acylsphing-4-enine + UDP-alpha-D-galactose = a beta-D-galactosyl-(1&lt;-&gt;1')-N-acylsphing-4-enine + UDP + H(+). The catalysed reaction is N-(2-hydroxy-hexanoyl)-sphing-4-enine + UDP-alpha-D-galactose = N-(2-hydroxy-hexanoyl)-beta-D-galactosyl-sphing-4-enine + UDP + H(+). The enzyme catalyses N-(2-hydroxy-hexanoyl)-sphinganine + UDP-alpha-D-galactose = N-(2-hydroxyhexanoyl)-beta-D-galactosylsphinganine + UDP + H(+). It catalyses the reaction an N-acyl-sphingoid base + UDP-alpha-D-galactose = a D-galactosylceramide + UDP + H(+). It functions in the pathway sphingolipid metabolism; galactosylceramide biosynthesis. In terms of biological role, catalyzes the transfer of galactose to ceramide, a key enzymatic step in the biosynthesis of galactocerebrosides, which are abundant sphingolipids of the myelin membrane of the central nervous system and peripheral nervous system. Galactosylates both hydroxy- and non-hydroxy fatty acid-containing ceramides and diglycerides. In Mus musculus (Mouse), this protein is 2-hydroxyacylsphingosine 1-beta-galactosyltransferase.